Consider the following 190-residue polypeptide: Potassium-transporting ATPase KdpC subunit (190 aa).

The chain crosses the membrane as a helical span at residues leucine 11–alanine 31.

This sequence belongs to the KdpC family. As to quaternary structure, the system is composed of three essential subunits: KdpA, KdpB and KdpC.

The protein resides in the cell inner membrane. Functionally, part of the high-affinity ATP-driven potassium transport (or Kdp) system, which catalyzes the hydrolysis of ATP coupled with the electrogenic transport of potassium into the cytoplasm. This subunit acts as a catalytic chaperone that increases the ATP-binding affinity of the ATP-hydrolyzing subunit KdpB by the formation of a transient KdpB/KdpC/ATP ternary complex. The chain is Potassium-transporting ATPase KdpC subunit from Pseudomonas syringae pv. tomato (strain ATCC BAA-871 / DC3000).